The following is a 264-amino-acid chain: Thiazole synthase (264 aa).

The active-site Schiff-base intermediate with DXP is the K106. 1-deoxy-D-xylulose 5-phosphate contacts are provided by residues G167, 193-194 (AG), and 215-216 (NT).

The protein belongs to the ThiG family. Homotetramer. Forms heterodimers with either ThiH or ThiS.

The protein localises to the cytoplasm. It carries out the reaction [ThiS sulfur-carrier protein]-C-terminal-Gly-aminoethanethioate + 2-iminoacetate + 1-deoxy-D-xylulose 5-phosphate = [ThiS sulfur-carrier protein]-C-terminal Gly-Gly + 2-[(2R,5Z)-2-carboxy-4-methylthiazol-5(2H)-ylidene]ethyl phosphate + 2 H2O + H(+). The protein operates within cofactor biosynthesis; thiamine diphosphate biosynthesis. Catalyzes the rearrangement of 1-deoxy-D-xylulose 5-phosphate (DXP) to produce the thiazole phosphate moiety of thiamine. Sulfur is provided by the thiocarboxylate moiety of the carrier protein ThiS. In vitro, sulfur can be provided by H(2)S. The protein is Thiazole synthase of Thioalkalivibrio sulfidiphilus (strain HL-EbGR7).